Consider the following 265-residue polypeptide: Formyltransferase/hydrolase complex Fhc subunit C (265 aa).

The protein belongs to the FwdC/FmdC family. As to quaternary structure, octaheteromer. Part of the formyltransferase/hydrolase complex fhc; composed of FhcA, FhcB, FhcC and FhcD.

Its subcellular location is the cytoplasm. It functions in the pathway one-carbon metabolism; formaldehyde degradation; formate from formaldehyde (H(4)MPT route): step 4/5. Its function is as follows. Involved in the transformation of 5-formyl tetrahydromethanopterin (5-formyl-H(4)MPT) to methanofuran (MFR) and formate via the formylmethanofuran (formyl-MFR). The chain is Formyltransferase/hydrolase complex Fhc subunit C (fhcC) from Methylorubrum extorquens (strain ATCC 14718 / DSM 1338 / JCM 2805 / NCIMB 9133 / AM1) (Methylobacterium extorquens).